Consider the following 252-residue polypeptide: Gastrula zinc finger protein XlCGF28.1 (252 aa).

9 consecutive C2H2-type zinc fingers follow at residues 6–28 (FTCNECGKFFSCTSWLNVHLRSH), 34–56 (FTCSECGKFFSCMSRLKVHFRGH), 62–84 (SACTECEKCFSSISQRNIHIRSH), 90–112 (YTCTVCGKIFTRISQFNVHVRSH), 118–140 (FKCTECGKSFICNSQLNLHLRFH), 146–168 (TTCSECGKCFTHTSHLNVHFRVH), 174–196 (FTCTECGKCLTRQYQLTEHSYLH), 202–224 (YTCTECGKCFTRRYHLTEHSYLH), and 230–252 (FTCTECGKGFTRRSHLKAHSHTH).

The protein belongs to the krueppel C2H2-type zinc-finger protein family.

The protein localises to the nucleus. In terms of biological role, may be involved in transcriptional regulation. This chain is Gastrula zinc finger protein XlCGF28.1, found in Xenopus laevis (African clawed frog).